Consider the following 957-residue polypeptide: Glycine dehydrogenase (decarboxylating) (957 aa).

Lys704 carries the post-translational modification N6-(pyridoxal phosphate)lysine.

Belongs to the GcvP family. The glycine cleavage system is composed of four proteins: P, T, L and H. The cofactor is pyridoxal 5'-phosphate.

The catalysed reaction is N(6)-[(R)-lipoyl]-L-lysyl-[glycine-cleavage complex H protein] + glycine + H(+) = N(6)-[(R)-S(8)-aminomethyldihydrolipoyl]-L-lysyl-[glycine-cleavage complex H protein] + CO2. Functionally, the glycine cleavage system catalyzes the degradation of glycine. The P protein binds the alpha-amino group of glycine through its pyridoxal phosphate cofactor; CO(2) is released and the remaining methylamine moiety is then transferred to the lipoamide cofactor of the H protein. The sequence is that of Glycine dehydrogenase (decarboxylating) from Bordetella petrii (strain ATCC BAA-461 / DSM 12804 / CCUG 43448).